Reading from the N-terminus, the 178-residue chain is ATP-dependent protease subunit HslV (178 aa).

Residue Thr-7 is part of the active site. Residues Gly-162, Cys-165, and Thr-168 each contribute to the Na(+) site.

It belongs to the peptidase T1B family. HslV subfamily. A double ring-shaped homohexamer of HslV is capped on each side by a ring-shaped HslU homohexamer. The assembly of the HslU/HslV complex is dependent on binding of ATP.

It localises to the cytoplasm. It catalyses the reaction ATP-dependent cleavage of peptide bonds with broad specificity.. Allosterically activated by HslU binding. Protease subunit of a proteasome-like degradation complex believed to be a general protein degrading machinery. This chain is ATP-dependent protease subunit HslV, found in Burkholderia lata (strain ATCC 17760 / DSM 23089 / LMG 22485 / NCIMB 9086 / R18194 / 383).